The sequence spans 273 residues: Ethanolamine ammonia-lyase small subunit (273 aa).

Adenosylcob(III)alamin is bound by residues valine 164, glutamate 185, and cysteine 214.

This sequence belongs to the EutC family. In terms of assembly, the basic unit is a heterodimer which dimerizes to form tetramers. The heterotetramers trimerize; 6 large subunits form a core ring with 6 small subunits projecting outwards. The cofactor is adenosylcob(III)alamin.

It localises to the bacterial microcompartment. The catalysed reaction is ethanolamine = acetaldehyde + NH4(+). The protein operates within amine and polyamine degradation; ethanolamine degradation. Catalyzes the deamination of various vicinal amino-alcohols to oxo compounds. Allows this organism to utilize ethanolamine as the sole source of nitrogen and carbon in the presence of external vitamin B12. This Pseudomonas paraeruginosa (strain DSM 24068 / PA7) (Pseudomonas aeruginosa (strain PA7)) protein is Ethanolamine ammonia-lyase small subunit.